A 232-amino-acid polypeptide reads, in one-letter code: DASH complex subunit DUO1 (232 aa).

2 disordered regions span residues 1–44 (MADE…GGMR) and 133–232 (ERRR…RGAK). Residues 128–171 (ELEAEERRRQEEVERRAAEAERRREEARRKAEEEERRRAAAAAA) are a coiled coil. The segment covering 133-165 (ERRRQEEVERRAAEAERRREEARRKAEEEERRR) has biased composition (basic and acidic residues). Composition is skewed to low complexity over residues 167–183 (AAAA…VGRG) and 191–213 (GSGL…TTSG).

The protein belongs to the DASH complex DUO1 family. In terms of assembly, component of the DASH complex consisting of ASK1, DAD1, DAD2, DAD3, DAD4, DAM1, DUO1, HSK3, SPC19 and SPC34, with a stoichiometry of one copy of each subunit per complex. Multiple DASH complexes oligomerize to form a ring that encircles spindle microtubules and organizes the rod-like NDC80 complexes of the outer kinetochore. DASH complex oligomerization strengthens microtubule attachments. On cytoplasmic microtubules, DASH complexes appear to form patches instead of rings.

The protein resides in the nucleus. It localises to the cytoplasm. Its subcellular location is the cytoskeleton. It is found in the spindle pole. The protein localises to the chromosome. The protein resides in the centromere. It localises to the kinetochore. Functionally, component of the DASH complex that connects microtubules with kinetochores and couples microtubule depolymerisation to chromosome movement; it is involved in retrieving kinetochores to the spindle poles before their re-orientation on the spindle in early mitosis and allows microtubule depolymerization to pull chromosomes apart and resist detachment during anaphase. Kinetochores, consisting of a centromere-associated inner segment and a microtubule-contacting outer segment, play a crucial role in chromosome segregation by mediating the physical connection between centromeric DNA and microtubules. Kinetochores also serve as an input point for the spindle assembly checkpoint, which delays anaphase until all chromosomes have bioriented on the mitotic spindle. This Chaetomium thermophilum (strain DSM 1495 / CBS 144.50 / IMI 039719) (Thermochaetoides thermophila) protein is DASH complex subunit DUO1.